We begin with the raw amino-acid sequence, 228 residues long: MKNTFLNTVKGSLIISCQALPNEPLHSSFIMSRMALAAKGAGAAGIRANSVVDIQAIQDEVDLPLIGLSKVDYPDSPVYITPTIKEMRAVAATGCAVVACDVTGQPRPNGEKLAEIVATMRTEFPDTLLMADTDTIENVKVADKLGFDIIGTTMHGYTPATTGANIADNDFAYLKEVLQATSRPVIAEGKVDTPEKMKRCLDLGCHAVVVGGAITRPLEIAQRFISAL.

It belongs to the NanE family.

It catalyses the reaction an N-acyl-D-glucosamine 6-phosphate = an N-acyl-D-mannosamine 6-phosphate. The protein operates within amino-sugar metabolism; N-acetylneuraminate degradation; D-fructose 6-phosphate from N-acetylneuraminate: step 3/5. In terms of biological role, converts N-acetylmannosamine-6-phosphate (ManNAc-6-P) to N-acetylglucosamine-6-phosphate (GlcNAc-6-P). This Lactiplantibacillus plantarum (strain ATCC BAA-793 / NCIMB 8826 / WCFS1) (Lactobacillus plantarum) protein is Putative N-acetylmannosamine-6-phosphate 2-epimerase.